The sequence spans 97 residues: Acylphosphatase (97 aa).

The region spanning 9-97 is the Acylphosphatase-like domain; sequence RKHIVVTGLV…ETARAFGVRQ (89 aa). Catalysis depends on residues Arg-24 and Asn-42.

It belongs to the acylphosphatase family.

The enzyme catalyses an acyl phosphate + H2O = a carboxylate + phosphate + H(+). The chain is Acylphosphatase (acyP) from Bifidobacterium longum (strain NCC 2705).